The chain runs to 296 residues: Protoheme IX farnesyltransferase (296 aa).

Residues 1-9 (MMFKQYLQV) are Cytoplasmic-facing. The chain crosses the membrane as a helical span at residues 10 to 28 (TKPGIIFGNLISVIGGFLL). Residues 29–37 (ASKGSIDYP) lie on the Periplasmic side of the membrane. Residues 38-56 (LFIYTLVGVSLVVASGCVF) form a helical membrane-spanning segment. At 57–78 (NNFIDRDIDRKMERTKNRVLVK) the chain is on the cytoplasmic side. Residues 79–97 (GLISPGVSLVYATLLGIAG) traverse the membrane as a helical segment. Topologically, residues 98 to 107 (FMLLWFGANP) are periplasmic. Residues 108-126 (LACWLGVMGFVVYVGIYSL) traverse the membrane as a helical segment. The Cytoplasmic portion of the chain corresponds to 127–197 (YMKRHSVYGT…YQAANIPVLP (71 aa)). Residues 198–216 (VVKGISVAKNHITLYIIAF) traverse the membrane as a helical segment. Residues 217 to 228 (AVATLMLTLGGY) are Periplasmic-facing. A helical membrane pass occupies residues 229–247 (AGYKYLVVAAAVSVWWLGM). At 248-268 (ALRGYKVEDDKVWARKLFGFS) the chain is on the cytoplasmic side. A helical transmembrane segment spans residues 269-287 (IIAITALSIMMSVDFMVPN). The Periplasmic portion of the chain corresponds to 288 to 296 (SQSLLTYVW).

It belongs to the UbiA prenyltransferase family. Protoheme IX farnesyltransferase subfamily.

The protein localises to the cell inner membrane. It catalyses the reaction heme b + (2E,6E)-farnesyl diphosphate + H2O = Fe(II)-heme o + diphosphate. It participates in porphyrin-containing compound metabolism; heme O biosynthesis; heme O from protoheme: step 1/1. Its function is as follows. Converts heme B (protoheme IX) to heme O by substitution of the vinyl group on carbon 2 of heme B porphyrin ring with a hydroxyethyl farnesyl side group. The sequence is that of Protoheme IX farnesyltransferase from Salmonella arizonae (strain ATCC BAA-731 / CDC346-86 / RSK2980).